The chain runs to 227 residues: MYSAHCMLPELRLYQLISPSLPVGGFTYSQGLEWAIDKGWVTTATELENWLKSQMLESLTCLELPVLVRIQGYLAANDYAQAQAWCNYLAASRETKELRLEEHQRGIAFVRLLPKLGIALTSELTTMVKTSQLAAFALGINQWQIPLDKALGGYLWSWLENAVVVGIKLVPLGQSAGQQLLMSLAENIPAAVEKALLITDQEVGSFTPAQVMASCRHEHQYTRLFRS.

Belongs to the UreF family. In terms of assembly, ureD, UreF and UreG form a complex that acts as a GTP-hydrolysis-dependent molecular chaperone, activating the urease apoprotein by helping to assemble the nickel containing metallocenter of UreC. The UreE protein probably delivers the nickel.

It is found in the cytoplasm. Its function is as follows. Required for maturation of urease via the functional incorporation of the urease nickel metallocenter. The polypeptide is Urease accessory protein UreF (Shewanella halifaxensis (strain HAW-EB4)).